The chain runs to 320 residues: Glucokinase (320 aa).

12–17 (GDIGGT) contacts ATP.

The protein belongs to the bacterial glucokinase family.

Its subcellular location is the cytoplasm. It carries out the reaction D-glucose + ATP = D-glucose 6-phosphate + ADP + H(+). This is Glucokinase from Nitrobacter hamburgensis (strain DSM 10229 / NCIMB 13809 / X14).